A 668-amino-acid chain; its full sequence is 1-deoxy-D-xylulose-5-phosphate synthase (668 aa).

Thiamine diphosphate is bound by residues H105 and A146–S148. D177 contacts Mg(2+). Residues G178–A179, N206, Y316, and E398 contribute to the thiamine diphosphate site. N206 contributes to the Mg(2+) binding site.

The protein belongs to the transketolase family. DXPS subfamily. In terms of assembly, homodimer. It depends on Mg(2+) as a cofactor. Requires thiamine diphosphate as cofactor.

It catalyses the reaction D-glyceraldehyde 3-phosphate + pyruvate + H(+) = 1-deoxy-D-xylulose 5-phosphate + CO2. Its pathway is metabolic intermediate biosynthesis; 1-deoxy-D-xylulose 5-phosphate biosynthesis; 1-deoxy-D-xylulose 5-phosphate from D-glyceraldehyde 3-phosphate and pyruvate: step 1/1. Functionally, catalyzes the acyloin condensation reaction between C atoms 2 and 3 of pyruvate and glyceraldehyde 3-phosphate to yield 1-deoxy-D-xylulose-5-phosphate (DXP). This chain is 1-deoxy-D-xylulose-5-phosphate synthase, found in Nitrobacter hamburgensis (strain DSM 10229 / NCIMB 13809 / X14).